We begin with the raw amino-acid sequence, 87 residues long: Small ribosomal subunit protein bS20 (87 aa).

The span at 1–15 (MANHKSAAKRARQSI) shows a compositional bias: basic residues. A disordered region spans residues 1–29 (MANHKSAAKRARQSIRKTAVNNARKSTVK). The span at 19-29 (AVNNARKSTVK) shows a compositional bias: polar residues.

The protein belongs to the bacterial ribosomal protein bS20 family.

Binds directly to 16S ribosomal RNA. The sequence is that of Small ribosomal subunit protein bS20 from Bdellovibrio bacteriovorus (strain ATCC 15356 / DSM 50701 / NCIMB 9529 / HD100).